The following is a 127-amino-acid chain: Thioredoxin (127 aa).

Residues 2–115 (SDGVKHINSA…LRAAAEKMGR (114 aa)) enclose the Thioredoxin domain. Catalysis depends on nucleophile residues Cys33 and Cys36. A disulfide bond links Cys33 and Cys36.

The protein belongs to the thioredoxin family.

In terms of biological role, participates in various redox reactions through the reversible oxidation of its active center dithiol to a disulfide and catalyzes dithiol-disulfide exchange reactions. The polypeptide is Thioredoxin (trx) (Neurospora crassa (strain ATCC 24698 / 74-OR23-1A / CBS 708.71 / DSM 1257 / FGSC 987)).